A 360-amino-acid polypeptide reads, in one-letter code: Alpha-2-macroglobulin receptor-associated protein (360 aa).

The first 28 residues, 1–28 (MAPRRERVSTLPRLQLLVLLLLPLMLVP), serve as a signal peptide directing secretion. Phosphoserine occurs at positions 53 and 138. A coiled-coil region spans residues 184-302 (EKIQEYNVLL…KHNHYQKQLE (119 aa)). The tract at residues 240 to 356 (RLRKVSHQGY…DLSSRVSRAR (117 aa)) is LDL receptor binding. Residue N271 is glycosylated (N-linked (GlcNAc...) asparagine). The short motif at 357–360 (HNEL) is the Prevents secretion from ER element.

Belongs to the alpha-2-MRAP family. Interacts with the LRP1/alpha-2-macroglobulin receptor heavy and light chains; the interaction is transient and coincides with a reduction of ligand binding by the receptor. Interacts with LRP2/glycoprotein 330. Interacts with LRP1B; binding is followed by internalization and degradation. Interacts with LDLR. Interacts with SORL1. Interacts with LRP1; this interaction is followed by rapid internalization. Post-translationally, N-glycosylated. As to expression, highly expressed in PYS-2 parietal endoderm cells and in the kidney. The RNA level increased about 10-fold during differentiation of F9 embryonal carcinoma cells to parietal endoderm cells.

It is found in the rough endoplasmic reticulum lumen. Its subcellular location is the endoplasmic reticulum-Golgi intermediate compartment lumen. It localises to the golgi apparatus. The protein resides in the cis-Golgi network. The protein localises to the golgi apparatus lumen. It is found in the endosome lumen. Its subcellular location is the cell surface. In terms of biological role, molecular chaperone for LDL receptor-related proteins that may regulate their ligand binding activity along the secretory pathway. The polypeptide is Alpha-2-macroglobulin receptor-associated protein (Lrpap1) (Mus musculus (Mouse)).